Here is a 59-residue protein sequence, read N- to C-terminus: Large ribosomal subunit protein bL32 (59 aa).

A disordered region spans residues 1–59; it reads MAVQQNKKSPSKRGMHRSHDALTAPALFVDSTTGEVHRPHHISPNGMYRGRKVVKAKGE. The segment covering 49-59 has biased composition (basic residues); that stretch reads RGRKVVKAKGE.

It belongs to the bacterial ribosomal protein bL32 family.

In Neisseria gonorrhoeae (strain ATCC 700825 / FA 1090), this protein is Large ribosomal subunit protein bL32.